We begin with the raw amino-acid sequence, 549 residues long: Cation/acetate symporter ActP (549 aa).

Transmembrane regions (helical) follow at residues 33–53 (WQAIIMFLIFVVFTLGITYWA), 77–97 (LAIAGDYMSAASFLGISALVF), 103–123 (GLIYSLGFLVGWPIILFLIAE), 148–168 (ILSACGSLVVVALYLIAQMVG), 183–203 (IAVVLVGVLMMMYVLFGGMLA), 206–226 (WVQIIKAVLLLFGASFMAFMV), 262–282 (ISALSLGLGLMFGTAGLPHIL), 303–323 (GFMGYFYILTFIIGFGAIMLV), 355–375 (LFLGFISAVAFATILAVVAGL), 404–424 (VSKITVLILGVIAIILGVLFE), 428–448 (IAFMVGLAFAIAASCNFPIIL), 464–484 (GGWLGLITAVVLMILGPTIWV), and 493–513 (IFPYEYPALFSITVAFLGIWF).

This sequence belongs to the sodium:solute symporter (SSF) (TC 2.A.21) family.

It localises to the cell inner membrane. Transports acetate. The sequence is that of Cation/acetate symporter ActP from Escherichia coli (strain ATCC 8739 / DSM 1576 / NBRC 3972 / NCIMB 8545 / WDCM 00012 / Crooks).